The following is a 293-amino-acid chain: tRNA (guanine-N(7)-)-methyltransferase (293 aa).

A compositionally biased stretch (basic and acidic residues) spans Met-1–Arg-31. Disordered regions lie at residues Met-1 to Lys-33 and Ile-68 to Arg-97. Residues Thr-75–Glu-85 show a composition bias toward pro residues. Residues Gly-111, Glu-134 to Ile-135, Asn-169 to Thr-170, and Cys-189 contribute to the S-adenosyl-L-methionine site. Asp-192 is an active-site residue. An S-adenosyl-L-methionine-binding site is contributed by Thr-267–Glu-269.

Belongs to the class I-like SAM-binding methyltransferase superfamily. TrmB family. In terms of assembly, forms a complex with TRM82.

The protein resides in the nucleus. It carries out the reaction guanosine(46) in tRNA + S-adenosyl-L-methionine = N(7)-methylguanosine(46) in tRNA + S-adenosyl-L-homocysteine. It participates in tRNA modification; N(7)-methylguanine-tRNA biosynthesis. In terms of biological role, catalyzes the formation of N(7)-methylguanine at position 46 (m7G46) in tRNA. This is tRNA (guanine-N(7)-)-methyltransferase from Chaetomium globosum (strain ATCC 6205 / CBS 148.51 / DSM 1962 / NBRC 6347 / NRRL 1970) (Soil fungus).